The chain runs to 382 residues: Secreted triacylglycerol lipase LIP5 (382 aa).

Cys40 and Cys211 are disulfide-bonded. N-linked (GlcNAc...) asparagine glycosylation occurs at Asn115. Ser124 acts as the Nucleophile in catalysis. Residues Asn157 and Asn232 are each glycosylated (N-linked (GlcNAc...) asparagine). Active-site residues include Asp271 and His305. N-linked (GlcNAc...) asparagine glycosylation occurs at Asn346.

Belongs to the AB hydrolase superfamily. Lipase family. Class Lip subfamily.

The protein resides in the secreted. It carries out the reaction a triacylglycerol + H2O = a diacylglycerol + a fatty acid + H(+). The enzyme catalyses a monoacylglycerol + H2O = glycerol + a fatty acid + H(+). The catalysed reaction is a diacylglycerol + H2O = a monoacylglycerol + a fatty acid + H(+). Functionally, secreted lipase that hydrolyzes acylglycerol lipids such as triacylglycerols and consequently releases free fatty acid. Can hydrolyze 4-nitrophenyl palmitate to release 4-nitrophenol and palmitoic acid. Due to an absence of fatty acid synthase genes in Malassezia species, secretory lipases are essential for the yeast to generate free fatty acids from degradation of sebum and assimilate them as lipid sources for growth. Plays important roles not only in lipid metabolism but also in the immune response of host cells and pathogenesis. The chain is Secreted triacylglycerol lipase LIP5 from Malassezia furfur (Pityriasis versicolor infection agent).